The following is a 448-amino-acid chain: Packaging protein 1 (448 aa).

Residues 1 to 76 (METKGRRSAA…SQPAKRGGLL (76 aa)) form a disordered region. The span at 22–31 (PRKRPTRRAP) shows a compositional bias: basic residues. The segment covering 56 to 67 (RPSSDSLLQEPS) has biased composition (polar residues). 171 to 178 (GPTGCGKS) lines the ATP pocket. Positions 440-448 (RAYRARKIK) are DNA-binding.

The protein belongs to the adenoviridae packaging protein 1 family. In terms of assembly, homodimer. Part of a genome packaging complex composed of packaging proteins 1, 2 and 3; this complex specifically binds to the packaging sequence on the left end of viral genomic DNA and performs packaging of the viral genome. Interacts with protein 33K.

It localises to the virion. Its subcellular location is the host nucleus. The protein resides in the host nucleoplasm. It is found in the host nucleolus. In terms of biological role, component of the packaging machinery which encapsidates the viral DNA into preformed capsids and transcriptional activator of the viral major late promoter (MLP). Binds, along with packaging proteins 2 and 3, to the specific packaging sequence on the left end of viral genomic DNA and displays ATPase activity thereby providing the power stroke of the packaging machinery. The activity of packaging protein IVa2 is stimulated by protein 33K which acts as a terminase. May be the protein that pumps DNA into the capsid powered by ATP hydrolysis. Specifically binds to the 5'-CG-3' nucleotides of the repeats making up the packaging sequence. Component of the DEF-A and DEF-B transcription factors that bind downstream elements of the major late promoter (MLP), and stimulate transcription from the MLP after initiation of viral DNA replication. DEF-A is a heterodimer packaging proteins 1 and 2 and DEF-B is a homodimer of packaging protein 1. The polypeptide is Packaging protein 1 (Human adenovirus B serotype 7 (HAdV-7)).